The following is a 197-amino-acid chain: Dermorphin-1 (197 aa).

A signal peptide spans 1 to 20; it reads MSFLKKSLLLILFLGLVSLS. The propeptide occupies 21-45; the sequence is VCKEEKRETEEENENEENHEEGSEM. Positions 24–197 are disordered; sequence EEKRETEEEN…GYPSGEAKKM (174 aa). A compositionally biased stretch (acidic residues) spans 30–39; sequence EEENENEENH. Over residues 40–62 the composition is skewed to basic and acidic residues; it reads EEGSEMKRYMFHLMDGEAKKRDS. Residue Met-49 is modified to D-methionine. Aspartic acid 1-amide is present on Asp-54. The propeptide occupies 56 to 77; sequence EAKKRDSEENEIEENHEEGSEM. A D-alanine (Ala) modification is found at Ala-81. Position 86 is a serine amide (Ser-86). The segment covering 88–97 has biased composition (basic and acidic residues); that stretch reads EAKKIKRVSE. A propeptide spanning residues 88–112 is cleaved from the precursor; the sequence is EAKKIKRVSEEENENEENHEEGSEM. Ala-116 carries the post-translational modification D-alanine (Ala). Position 121 is a serine amide (Ser-121). Basic and acidic residues predominate over residues 123–132; sequence EAKKIKRESE. Positions 123-147 are excised as a propeptide; it reads EAKKIKRESEEEKEIEENHEEGSEM. D-alanine (Ala) is present on Ala-151. At Ser-156 the chain carries Serine amide. Positions 158–182 are excised as a propeptide; it reads EAKKIKRESEEENENEENHEEGSEM. Residues 167-176 show a composition bias toward acidic residues; sequence EEENENEENH. D-alanine (Ala) is present on Ala-186. Position 191 is a serine amide (Ser-191). Positions 193–197 are excised as a propeptide; that stretch reads EAKKM.

The protein belongs to the frog skin active peptide (FSAP) family. Dermorphin subfamily. In terms of tissue distribution, expressed by the skin glands.

The protein resides in the secreted. Functionally, dermorphin has a very potent opiate-like activity. It has high affinity and selectivity for mu-type opioid receptors. Its function is as follows. Deltorphin has a very potent opiate-like activity. It has high affinity and selectivity for delta-type opioid receptors. This chain is Dermorphin-1, found in Phyllomedusa sauvagei (Sauvage's leaf frog).